Reading from the N-terminus, the 170-residue chain is Ureidoglycolate lyase (170 aa).

It belongs to the ureidoglycolate lyase family. Homodimer. The cofactor is Ni(2+).

The enzyme catalyses (S)-ureidoglycolate = urea + glyoxylate. It participates in nitrogen metabolism; (S)-allantoin degradation. Its function is as follows. Catalyzes the catabolism of the allantoin degradation intermediate (S)-ureidoglycolate, generating urea and glyoxylate. Involved in the utilization of allantoin as nitrogen source. This chain is Ureidoglycolate lyase, found in Pseudomonas syringae pv. tomato (strain ATCC BAA-871 / DC3000).